The chain runs to 268 residues: Tropinone reductase homolog At2g29150 (268 aa).

NADP(+) is bound at residue 22–46; it reads LVTGGSKGLGEAVVEELAMLGARVH. Serine 155 lines the substrate pocket. The active-site Proton acceptor is the tyrosine 167.

Belongs to the short-chain dehydrogenases/reductases (SDR) family. SDR65C subfamily.

Enantiospecific reductase active on cyclic monoterpenes and small flexible lipophilic carbonyls. No activity with tropinone, nitrogen-containing tropinone analogs, tropine or pseudotropine as substrate. This is Tropinone reductase homolog At2g29150 from Arabidopsis thaliana (Mouse-ear cress).